The sequence spans 695 residues: Nicastrin (695 aa).

Residues 1-22 (MEMRLNAASIWLLILSYGATIA) form the signal peptide. The Extracellular portion of the chain corresponds to 23–654 (QGERTRDKMY…IFLRPSNVHQ (632 aa)). Residues Asn45, Asn108, Asn116, Asn138, Asn381, Asn461, Asn489, Asn585, and Asn609 are each glycosylated (N-linked (GlcNAc...) asparagine). Residues 655 to 675 (VTTLSVGIVVLIISFCLVYII) traverse the membrane as a helical segment. Over 676 to 695 (SSRSEVLFEDLPASNAALFG) the chain is Cytoplasmic.

The protein belongs to the nicastrin family. In terms of assembly, component of the gamma-secretase complex, a complex composed of a presenilin (Psn) homodimer, nicastrin (Nct), Aph-1 and Pen-2.

It localises to the membrane. Functionally, essential subunit of the gamma-secretase complex, an endoprotease complex that catalyzes the intramembrane cleavage of integral membrane proteins such as Notch. It probably represents a stabilizing cofactor required for the assembly of the gamma-secretase complex. The sequence is that of Nicastrin from Drosophila melanogaster (Fruit fly).